Consider the following 634-residue polypeptide: Chaperone protein HtpG (634 aa).

The a; substrate-binding stretch occupies residues 1-342 (MTVDTDKQTL…SADLSLNVSR (342 aa)). A b region spans residues 343-559 (EILQSGPVVD…QGDLGLQMRQ (217 aa)). The c stretch occupies residues 560-634 (LLEASGQAVP…LNKLLLELSA (75 aa)).

This sequence belongs to the heat shock protein 90 family. Homodimer.

It is found in the cytoplasm. In terms of biological role, molecular chaperone. Has ATPase activity. The polypeptide is Chaperone protein HtpG (Xanthomonas campestris pv. campestris (strain ATCC 33913 / DSM 3586 / NCPPB 528 / LMG 568 / P 25)).